A 261-amino-acid polypeptide reads, in one-letter code: Cytochrome c oxidase subunit 3 (261 aa).

The Mitochondrial matrix segment spans residues 1 to 15; it reads MTHQTHAYHMVNPSP. The helical transmembrane segment at 16-34 threads the bilayer; that stretch reads WPLTGALSALLMTSGLAMW. Residues 35–40 lie on the Mitochondrial intermembrane side of the membrane; the sequence is FHFNSP. The chain crosses the membrane as a helical span at residues 41–66; that stretch reads SLLLIGLVTNTLTMYQWWRDIVREGT. Over 67 to 72 the chain is Mitochondrial matrix; that stretch reads FQGHHT. A helical membrane pass occupies residues 73–105; it reads PIVQKGLRYGMILFIISEVFFFAGFFWAFYHSS. Residues 106–128 lie on the Mitochondrial intermembrane side of the membrane; that stretch reads LAPTPELGGCWPPTGINPLNPLE. A helical transmembrane segment spans residues 129–152; sequence VPLLNTSVLLASGVSITWAHHSLM. The Mitochondrial matrix portion of the chain corresponds to 153–155; sequence EGN. The helical transmembrane segment at 156 to 183 threads the bilayer; that stretch reads RKNMQQALAITILLGIYFTLLQASEYYE. Residues 184–190 are Mitochondrial intermembrane-facing; sequence TSFTISD. A helical transmembrane segment spans residues 191–223; sequence GVYGSTFFMATGFHGLHVIIGSTFLTVCLLRQF. The Mitochondrial matrix portion of the chain corresponds to 224 to 232; the sequence is NFHFTSNHH. The chain crosses the membrane as a helical span at residues 233-256; the sequence is FGFEAAAWYWHFVDVVWLFLYVSI. Residues 257 to 261 lie on the Mitochondrial intermembrane side of the membrane; it reads YWWGS.

This sequence belongs to the cytochrome c oxidase subunit 3 family. Component of the cytochrome c oxidase (complex IV, CIV), a multisubunit enzyme composed of 14 subunits. The complex is composed of a catalytic core of 3 subunits MT-CO1, MT-CO2 and MT-CO3, encoded in the mitochondrial DNA, and 11 supernumerary subunits COX4I, COX5A, COX5B, COX6A, COX6B, COX6C, COX7A, COX7B, COX7C, COX8 and NDUFA4, which are encoded in the nuclear genome. The complex exists as a monomer or a dimer and forms supercomplexes (SCs) in the inner mitochondrial membrane with NADH-ubiquinone oxidoreductase (complex I, CI) and ubiquinol-cytochrome c oxidoreductase (cytochrome b-c1 complex, complex III, CIII), resulting in different assemblies (supercomplex SCI(1)III(2)IV(1) and megacomplex MCI(2)III(2)IV(2)).

The protein localises to the mitochondrion inner membrane. The catalysed reaction is 4 Fe(II)-[cytochrome c] + O2 + 8 H(+)(in) = 4 Fe(III)-[cytochrome c] + 2 H2O + 4 H(+)(out). Component of the cytochrome c oxidase, the last enzyme in the mitochondrial electron transport chain which drives oxidative phosphorylation. The respiratory chain contains 3 multisubunit complexes succinate dehydrogenase (complex II, CII), ubiquinol-cytochrome c oxidoreductase (cytochrome b-c1 complex, complex III, CIII) and cytochrome c oxidase (complex IV, CIV), that cooperate to transfer electrons derived from NADH and succinate to molecular oxygen, creating an electrochemical gradient over the inner membrane that drives transmembrane transport and the ATP synthase. Cytochrome c oxidase is the component of the respiratory chain that catalyzes the reduction of oxygen to water. Electrons originating from reduced cytochrome c in the intermembrane space (IMS) are transferred via the dinuclear copper A center (CU(A)) of subunit 2 and heme A of subunit 1 to the active site in subunit 1, a binuclear center (BNC) formed by heme A3 and copper B (CU(B)). The BNC reduces molecular oxygen to 2 water molecules using 4 electrons from cytochrome c in the IMS and 4 protons from the mitochondrial matrix. The chain is Cytochrome c oxidase subunit 3 (MT-CO3) from Oryctolagus cuniculus (Rabbit).